We begin with the raw amino-acid sequence, 237 residues long: Type II secretion system protein J (237 aa).

The propeptide at 1–6 (MRLQRG) is leader sequence. Phe7 carries the N-methylphenylalanine modification. A helical membrane pass occupies residues 7–29 (FTLLELLIAIAIFALLALATYRM). The segment at 203 to 237 (PLKQDQPQGQPGGENGENGEGGVPQPPEGMPGAPE) is disordered. Gly residues predominate over residues 212-224 (QPGGENGENGEGG). Pro residues predominate over residues 226-237 (PQPPEGMPGAPE).

It belongs to the GSP J family. Type II secretion is composed of four main components: the outer membrane complex, the inner membrane complex, the cytoplasmic secretion ATPase and the periplasm-spanning pseudopilus. Forms the tip of the type II pseudopilus by interacting with XcpV, XcpU and XcpX. Interacts with core component XcpT. Cleaved by prepilin peptidase. Post-translationally, methylated by prepilin peptidase at the amino group of the N-terminal phenylalanine once the leader sequence is cleaved by prepilin peptidase.

Its subcellular location is the cell inner membrane. In terms of biological role, component of the type II secretion system required for the energy-dependent secretion of extracellular factors such as proteases and toxins from the periplasm. Part of the pseudopilus tip complex that is critical for the recognition and binding of secretion substrates. Type II pseudopilus confers increased bacterial adhesive capabilities. The polypeptide is Type II secretion system protein J (xcpW) (Pseudomonas aeruginosa (strain ATCC 15692 / DSM 22644 / CIP 104116 / JCM 14847 / LMG 12228 / 1C / PRS 101 / PAO1)).